A 1026-amino-acid polypeptide reads, in one-letter code: Multidrug resistance protein MdtC (1026 aa).

Helical transmembrane passes span 15–35 (ILIA…LPVA), 333–353 (EVEE…FLFL), 360–380 (LIPA…MYLC), 387–407 (LSLM…IVVL), 431–451 (VGFT…PLLL), 463–483 (FAVT…TLTP), 528–548 (LVGV…IAIP), 853–873 (LILI…LYES), 897–917 (LFNA…IGIV), 953–973 (PIMM…LSGG), and 984–1004 (ITIV…TPVV).

The protein belongs to the resistance-nodulation-cell division (RND) (TC 2.A.6) family. MdtC subfamily. As to quaternary structure, part of a tripartite efflux system composed of MdtA, MdtB and MdtC. MdtC forms a heteromultimer with MdtB.

The protein localises to the cell inner membrane. This Salmonella arizonae (strain ATCC BAA-731 / CDC346-86 / RSK2980) protein is Multidrug resistance protein MdtC.